The following is a 326-amino-acid chain: Glycerol-3-phosphate dehydrogenase [NAD(P)+] (326 aa).

NADPH is bound by residues Ser-10, Phe-11, Arg-31, and Lys-108. Sn-glycerol 3-phosphate-binding residues include Lys-108, Gly-136, and Ser-138. Position 140 (Ala-140) interacts with NADPH. Positions 191, 246, 256, 257, and 258 each coordinate sn-glycerol 3-phosphate. The Proton acceptor role is filled by Lys-191. Arg-257 serves as a coordination point for NADPH. NADPH contacts are provided by Ile-281 and Glu-283.

This sequence belongs to the NAD-dependent glycerol-3-phosphate dehydrogenase family.

It localises to the cytoplasm. It carries out the reaction sn-glycerol 3-phosphate + NAD(+) = dihydroxyacetone phosphate + NADH + H(+). The enzyme catalyses sn-glycerol 3-phosphate + NADP(+) = dihydroxyacetone phosphate + NADPH + H(+). The protein operates within membrane lipid metabolism; glycerophospholipid metabolism. Functionally, catalyzes the reduction of the glycolytic intermediate dihydroxyacetone phosphate (DHAP) to sn-glycerol 3-phosphate (G3P), the key precursor for phospholipid synthesis. This is Glycerol-3-phosphate dehydrogenase [NAD(P)+] from Ehrlichia chaffeensis (strain ATCC CRL-10679 / Arkansas).